The primary structure comprises 258 residues: Maintenance of carboxysome distribution protein A (258 aa).

ATP contacts are provided by Gly-11, Gly-12, Gln-13, Gly-14, Lys-15, Thr-16, Thr-17, Gln-40, Glu-147, Lys-151, Phe-182, Arg-183, Leu-216, Glu-217, Ser-218, and Tyr-221. Mg(2+) is bound at residue Thr-16.

This sequence belongs to the ParA family. McdA subfamily. In terms of assembly, homodimerizes in the presence of ATP, making extra nucleotide contacts than with ADP or AMP-PNP. Each subunit binds 1 ATP molecule; Glu-147, Lys-151 and Arg-183 cross the dimer interface to contact ATP in the other subunit, while Phe-182, Arg-183 and Tyr-221 stack with the adenine base in their own subunit. Forms a complex with McdB.

It is found in the cytoplasm. Its subcellular location is the nucleoid. The enzyme catalyses ATP + H2O = ADP + phosphate + H(+). McdA and McdB together mediate carboxysome (Cb) spacing, size, ultrastructure and probably inheritance in the cell, together they prevent Cb aggregation. McdA is an ATPase that forms dynamic gradients on the nucleoid in response to adapter protein McdB, which associates with carboxysomes. The interplay between McdA gradients on the nucleoid and McdB-bound carboxysomes result in the equal spacing of Cbs along the cell length. Binds DNA saturably and strongly in the presence of Mg(2+)ATP; without ATP, DNA-binding is very poor (tested with a mutant that should not be able to hydrolyze ATP, Asp-38-Ala). Decreasing the NaCl concentration increases DNA binding. Functionally, incorrect positioning (aggregation) of carboxysomes results in reduced CO(2) fixation by encapsulated ribulose-1,5-bisphosphate carboxylase (RuBisCO, cbbL/cbbS), which leads to slower growth. This chain is Maintenance of carboxysome distribution protein A, found in Gloeothece citriformis (strain PCC 7424) (Cyanothece sp. (strain PCC 7424)).